A 217-amino-acid polypeptide reads, in one-letter code: Octanoyltransferase (217 aa).

Residues 34–216 (SETRDELWLL…AASRASRHDR (183 aa)) enclose the BPL/LPL catalytic domain. Substrate contacts are provided by residues 73-80 (RGGQVTWH), 140-142 (ALG), and 153-155 (GLS). Cys171 acts as the Acyl-thioester intermediate in catalysis.

The protein belongs to the LipB family.

Its subcellular location is the cytoplasm. It catalyses the reaction octanoyl-[ACP] + L-lysyl-[protein] = N(6)-octanoyl-L-lysyl-[protein] + holo-[ACP] + H(+). It participates in protein modification; protein lipoylation via endogenous pathway; protein N(6)-(lipoyl)lysine from octanoyl-[acyl-carrier-protein]: step 1/2. Its function is as follows. Catalyzes the transfer of endogenously produced octanoic acid from octanoyl-acyl-carrier-protein onto the lipoyl domains of lipoate-dependent enzymes. Lipoyl-ACP can also act as a substrate although octanoyl-ACP is likely to be the physiological substrate. The polypeptide is Octanoyltransferase (Halorhodospira halophila (strain DSM 244 / SL1) (Ectothiorhodospira halophila (strain DSM 244 / SL1))).